Consider the following 450-residue polypeptide: MIANETIAAIATPPGIGGVCIIRISGAQAHAIAVNITHKKNLVPRQAILSHFYDLSGEQIDQGIVLYFPAPHSFTGEDVVELQGHGGIAVAHALLSATLDFGARLAHAGEFTQRAFLNDKLDLAQAEAVADLIHARSQDALRAANRSLQGVFSQKIDALADELLRLRVYVEASLDFSEDEIDFLGEGKIREKLVDSLQKTQQLLAQSQQGQLLNDGIHLVLAGKPNAGKSSLLNALLGEERAIVTPQAGTTRDIVREDWIIDGIPVHLSDTAGLRESQDLVEQEGIRRSFDAVKRADIVLLLADGSARDNDARAEFVSLQEELHQLAPHAQFLVVYNKADLVDEQTAGDGLWISAKTGAGIEILLKKIATLAGKNQHEETVFIARKRHIHALESVEAHLQRALQQLEQFFVAELVAEELRLAHLALGTITGTVSSDDLLDEIFSGFCIGK.

(6S)-5-formyl-5,6,7,8-tetrahydrofolate is bound by residues Arg-23, Glu-81, and Lys-120. Positions 216 to 373 (GIHLVLAGKP…LLKKIATLAG (158 aa)) constitute a TrmE-type G domain. Residues 226–231 (NAGKSS), 245–251 (TPQAGTT), 270–273 (DTAG), and 337–340 (NKAD) contribute to the GTP site. Positions 230 and 251 each coordinate Mg(2+). Lys-450 is a binding site for (6S)-5-formyl-5,6,7,8-tetrahydrofolate.

This sequence belongs to the TRAFAC class TrmE-Era-EngA-EngB-Septin-like GTPase superfamily. TrmE GTPase family. Homodimer. Heterotetramer of two MnmE and two MnmG subunits. Requires K(+) as cofactor.

It is found in the cytoplasm. Functionally, exhibits a very high intrinsic GTPase hydrolysis rate. Involved in the addition of a carboxymethylaminomethyl (cmnm) group at the wobble position (U34) of certain tRNAs, forming tRNA-cmnm(5)s(2)U34. The chain is tRNA modification GTPase MnmE from Dichelobacter nodosus (strain VCS1703A).